Reading from the N-terminus, the 388-residue chain is S-adenosylmethionine synthase (388 aa).

An ATP-binding site is contributed by His14. Asp16 contributes to the Mg(2+) binding site. A K(+)-binding site is contributed by Glu42. L-methionine-binding residues include Glu55 and Gln98. The flexible loop stretch occupies residues 98–108 (QSAEISSAVDQ). Residues 166–168 (DGK), Asp242, 248–249 (RK), Ala265, and Lys269 contribute to the ATP site. Asp242 is an L-methionine binding site. Residue Lys273 coordinates L-methionine.

This sequence belongs to the AdoMet synthase family. In terms of assembly, homotetramer; dimer of dimers. Mg(2+) serves as cofactor. K(+) is required as a cofactor.

It localises to the cytoplasm. It catalyses the reaction L-methionine + ATP + H2O = S-adenosyl-L-methionine + phosphate + diphosphate. It functions in the pathway amino-acid biosynthesis; S-adenosyl-L-methionine biosynthesis; S-adenosyl-L-methionine from L-methionine: step 1/1. In terms of biological role, catalyzes the formation of S-adenosylmethionine (AdoMet) from methionine and ATP. The overall synthetic reaction is composed of two sequential steps, AdoMet formation and the subsequent tripolyphosphate hydrolysis which occurs prior to release of AdoMet from the enzyme. This chain is S-adenosylmethionine synthase, found in Oenococcus oeni (strain ATCC BAA-331 / PSU-1).